The primary structure comprises 98 residues: MSLAHINIFLAFTVSLVGLLMYRSHLMSSLLCLEGMMLSLFVMATMVVLNTHFTLASMMPIILLVFAACERALGLSLLVMVSNTYGVDHVQNLNLLQC.

Helical transmembrane passes span 1–21 (MSLA…GLLM), 25–45 (HLMS…VMAT), and 59–81 (MPII…LVMV).

Belongs to the complex I subunit 4L family. In terms of assembly, core subunit of respiratory chain NADH dehydrogenase (Complex I) which is composed of 45 different subunits.

It localises to the mitochondrion inner membrane. It catalyses the reaction a ubiquinone + NADH + 5 H(+)(in) = a ubiquinol + NAD(+) + 4 H(+)(out). Its function is as follows. Core subunit of the mitochondrial membrane respiratory chain NADH dehydrogenase (Complex I) which catalyzes electron transfer from NADH through the respiratory chain, using ubiquinone as an electron acceptor. Part of the enzyme membrane arm which is embedded in the lipid bilayer and involved in proton translocation. This chain is NADH-ubiquinone oxidoreductase chain 4L (MT-ND4L), found in Equus asinus (Donkey).